A 209-amino-acid polypeptide reads, in one-letter code: Uracil phosphoribosyltransferase (209 aa).

5-phospho-alpha-D-ribose 1-diphosphate-binding positions include arginine 79, arginine 104, and 131–139; that span reads DPMLATGGS. Residues valine 194 and 199–201 contribute to the uracil site; that span reads GDA. Position 200 (aspartate 200) interacts with 5-phospho-alpha-D-ribose 1-diphosphate.

It belongs to the UPRTase family. It depends on Mg(2+) as a cofactor.

The catalysed reaction is UMP + diphosphate = 5-phospho-alpha-D-ribose 1-diphosphate + uracil. It functions in the pathway pyrimidine metabolism; UMP biosynthesis via salvage pathway; UMP from uracil: step 1/1. With respect to regulation, allosterically activated by GTP. In terms of biological role, catalyzes the conversion of uracil and 5-phospho-alpha-D-ribose 1-diphosphate (PRPP) to UMP and diphosphate. In Bacillus mycoides (strain KBAB4) (Bacillus weihenstephanensis), this protein is Uracil phosphoribosyltransferase.